A 662-amino-acid chain; its full sequence is 72 kDa type IV collagenase (662 aa).

The first 29 residues, 1–29 (MEARVAWGALAGPLRVLCVLCCLLGRAIA), serve as a signal peptide directing secretion. Positions 30-109 (APSPIIKFPG…PRCGNPDVAN (80 aa)) are cleaved as a propeptide — activation peptide. A Cysteine switch motif is present at residues 100–107 (PRCGNPDV). Cys-102 contributes to the Zn(2+) binding site. The interval 110–221 (YNFFPRKPKW…LWTLGEGQVV (112 aa)) is collagenase-like 1. Residues Asp-134 and Asp-168 each coordinate Ca(2+). Positions 178 and 180 each coordinate Zn(2+). The Ca(2+) site is built by Asp-185 and Gly-186. His-193 provides a ligand contact to Zn(2+). Ca(2+) is bound by residues Gly-200, Gly-202, and Asp-204. His-206 contributes to the Zn(2+) binding site. Residues Asp-208, Asp-209, and Glu-211 each contribute to the Ca(2+) site. The interval 222–396 (RVKYGNADGE…WGFCPDQGYS (175 aa)) is collagen-binding. Fibronectin type-II domains follow at residues 228-276 (ADGE…FCPH), 286-334 (ADGQ…FCPE), and 344-392 (SEGA…FCPD). 6 disulfide bridges follow: Cys-233–Cys-259, Cys-247–Cys-274, Cys-291–Cys-317, Cys-305–Cys-332, Cys-349–Cys-375, and Cys-363–Cys-390. A collagenase-like 2 region spans residues 397 to 467 (LFLVAAHEFG…GPTPTLGPVT (71 aa)). His-403 lines the Zn(2+) pocket. The active site involves Glu-404. Positions 407 and 413 each coordinate Zn(2+). The required for inhibitor TIMP2 binding stretch occupies residues 414 to 662 (SQDPGALMAP…GSIKSDWLGC (249 aa)). The tract at residues 446–465 (GPSPDADTDTGTGPTPTLGP) is disordered. A disulfide bridge links Cys-471 with Cys-662. Hemopexin repeat units follow at residues 474–518 (DIVF…WPEL), 519–565 (PEKI…GLPP), 567–615 (VQQV…WNAI), and 616–662 (PDNL…WLGC). Ca(2+) contacts are provided by Asp-478, Asp-523, and Asp-571. N-linked (GlcNAc...) asparagine glycosylation occurs at Asn-575. A Ca(2+)-binding site is contributed by Asp-620. Asn-644 is a glycosylation site (N-linked (GlcNAc...) asparagine).

This sequence belongs to the peptidase M10A family. As to quaternary structure, interacts (via the C-terminal hemopexin-like domains-containing region) with the integrin alpha-V/beta-3; the interaction promotes vascular invasion in angiogenic vessels and melamoma cells. Interacts (via the C-terminal PEX domain) with TIMP2 (via the C-terminal); the interaction inhibits the degradation activity. Interacts with GSK3B. Ca(2+) is required as a cofactor. Zn(2+) serves as cofactor. Post-translationally, phosphorylation on multiple sites modulates enzymatic activity. Phosphorylated by PKC in vitro. In terms of processing, the propeptide is processed by MMP14 (MT-MMP1) and MMP16 (MT-MMP3). Autocatalytic cleavage in the C-terminal produces the anti-angiogenic peptide, PEX. This processing appears to be facilitated by binding integrinv/beta3.

The protein resides in the secreted. The protein localises to the extracellular space. Its subcellular location is the extracellular matrix. It is found in the membrane. It localises to the nucleus. The protein resides in the cytoplasm. The protein localises to the mitochondrion. It catalyses the reaction Cleavage of gelatin type I and collagen types IV, V, VII, X. Cleaves the collagen-like sequence Pro-Gln-Gly-|-Ile-Ala-Gly-Gln.. Its function is as follows. Ubiquitinous metalloproteinase that is involved in diverse functions such as remodeling of the vasculature, angiogenesis, tissue repair, tumor invasion, inflammation, and atherosclerotic plaque rupture. As well as degrading extracellular matrix proteins, can also act on several nonmatrix proteins such as big endothelial 1 and beta-type CGRP promoting vasoconstriction. Also cleaves KISS at a Gly-|-Leu bond. Appears to have a role in myocardial cell death pathways. Contributes to myocardial oxidative stress by regulating the activity of GSK3beta. Cleaves GSK3beta in vitro. Involved in the formation of the fibrovascular tissues. PEX, the C-terminal non-catalytic fragment of MMP2, possesses anti-angiogenic and anti-tumor properties and inhibits cell migration and cell adhesion to FGF2 and vitronectin. Ligand for integrin alpha-v/beta-3 on the surface of blood vessels. Functionally, mediates the proteolysis of CHUK/IKKA and initiates a primary innate immune response by inducing mitochondrial-nuclear stress signaling with activation of the pro-inflammatory NF-kappaB, NFAT and IRF transcriptional pathways. The protein is 72 kDa type IV collagenase (Mmp2) of Mus musculus (Mouse).